Reading from the N-terminus, the 1034-residue chain is Enteropeptidase (1034 aa).

The propeptide occupies 1 to 51 (MGSKRIIPSRHRSLSTYEVMFTALFAILMVLCAGLIAVSWLTIKGSEKDAA). The Cytoplasmic segment spans residues 2 to 18 (GSKRIIPSRHRSLSTYE). Residues 19–47 (VMFTALFAILMVLCAGLIAVSWLTIKGSE) form a helical; Signal-anchor for type II membrane protein membrane-spanning segment. Over 48-1034 (KDAALGKSHE…FTEWIQSFLH (987 aa)) the chain is Extracellular. The region spanning 54 to 169 (KSHEARGTMK…NSIDITESLE (116 aa)) is the SEA domain. 4 N-linked (GlcNAc...) asparagine glycosylation sites follow: Asn-116, Asn-147, Asn-170, and Asn-194. In terms of domain architecture, LDL-receptor class A 1 spans 197–238 (IECLPGSRPCADALKCIAVDLFCDGELNCPDGSDEDSKICAT). 4 cysteine pairs are disulfide-bonded: Cys-199-Cys-212, Cys-206-Cys-225, Cys-219-Cys-236, and Cys-240-Cys-268. Residues 240-349 (CDGKFLLTES…IGFNATYTAF (110 aa)) enclose the CUB 1 domain. N-linked (GlcNAc...) asparagine glycosylation is found at Asn-283, Asn-343, Asn-350, Asn-403, Asn-455, Asn-485, Asn-518, Asn-549, and Asn-645. In terms of domain architecture, MAM spans 357–519 (DEKINCNFED…ISLTYGICNV (163 aa)). A disulfide bridge links Cys-539 with Cys-567. The region spanning 539 to 649 (CGGPFELWEP…GGFKANFTTG (111 aa)) is the CUB 2 domain. The 39-residue stretch at 656-694 (EPCKEDNFQCENGECVLLVNLCDGFSHCKDGSDEAHCVR) folds into the LDL-receptor class A 2 domain. Cystine bridges form between Cys-658/Cys-670, Cys-665/Cys-683, and Cys-677/Cys-692. The SRCR domain occupies 693–786 (VRFLNGTANN…LILLQCNHKS (94 aa)). N-linked (GlcNAc...) asparagine glycosylation is found at Asn-697, Asn-701, Asn-721, Asn-740, and Asn-761. Disulfide bonds link Cys-772/Cys-782, Cys-787/Cys-911, Cys-825/Cys-841, Cys-925/Cys-992, Cys-956/Cys-971, and Cys-982/Cys-1010. The Peptidase S1 domain occupies 800–1034 (IVGGNDSREG…FTEWIQSFLH (235 aa)). N-linked (GlcNAc...) asparagine glycosylation is present at Asn-804. His-840 functions as the Charge relay system in the catalytic mechanism. Residue Asn-863 is glycosylated (N-linked (GlcNAc...) asparagine). The active-site Charge relay system is Asp-891. Asn-902 and Asn-964 each carry an N-linked (GlcNAc...) asparagine glycan. Ser-986 acts as the Charge relay system in catalysis.

The protein belongs to the peptidase S1 family. In terms of assembly, heterotrimer of a catalytic (light) chain, a multidomain (heavy) chain, and a mini chain. In terms of processing, the chains are derived from a single precursor that is cleaved by a trypsin-like protease. The mini chain may be cleaved by elastase.

Its subcellular location is the membrane. The catalysed reaction is Activation of trypsinogen by selective cleavage of 6-Lys-|-Ile-7 bond.. Functionally, responsible for initiating activation of pancreatic proteolytic proenzymes (trypsin, chymotrypsin and carboxypeptidase A). It catalyzes the conversion of trypsinogen to trypsin which in turn activates other proenzymes including chymotrypsinogen, procarboxypeptidases, and proelastases. This is Enteropeptidase (TMPRSS15) from Sus scrofa (Pig).